The primary structure comprises 571 residues: Urease subunit alpha (571 aa).

The 439-residue stretch at 133-571 folds into the Urease domain; the sequence is GGIDTHVHFV…LPLTQRYFLF (439 aa). Histidine 138, histidine 140, and lysine 221 together coordinate Ni(2+). Residue lysine 221 is modified to N6-carboxylysine. Histidine 223 provides a ligand contact to substrate. 2 residues coordinate Ni(2+): histidine 250 and histidine 276. Histidine 324 (proton donor) is an active-site residue. A Ni(2+)-binding site is contributed by aspartate 364.

It belongs to the metallo-dependent hydrolases superfamily. Urease alpha subunit family. Heterotrimer of UreA (gamma), UreB (beta) and UreC (alpha) subunits. Three heterotrimers associate to form the active enzyme. Ni cation is required as a cofactor. In terms of processing, carboxylation allows a single lysine to coordinate two nickel ions.

The protein localises to the cytoplasm. It catalyses the reaction urea + 2 H2O + H(+) = hydrogencarbonate + 2 NH4(+). It functions in the pathway nitrogen metabolism; urea degradation; CO(2) and NH(3) from urea (urease route): step 1/1. In Staphylococcus xylosus, this protein is Urease subunit alpha.